The sequence spans 473 residues: MKTLYSLRRFYPVETLFNGTLTLAGRDQETTGFAWWAGNARLINLSGKLLGAHVAHAGLIVFWAGAMNLFEVAHFVPEKPMYEQGLILLPHLATLGWGVGPGGEIVDTFPYFVSGVLHLISSAVLGFGGIYHALIGPETLEESFPFFGYVWKDRNKMTTILGIHLILLGVGAFLLVFKALYFGGIYDTWAPGGGDVRKITNLTLNPSTIFGYLLKSPFGGEGWIVSVDNLEDLIGGHVWLGSICIFGGIWHILTKPFAWARRAFVWSGEAYLSYSLAALSVFGFIACCFVWFNNTAYPSEFYGPTGPEASQAQAFTFLVRDQRLGASVGSAQGPTGLGKYLMRSPTGEIIFGGETMRFWDLRAPWLEPLRGPNGLDLSKLKKDIQPWQERRSAEYMTHAPLGSLNSVGGVATEINAVNYVSPRSWLATSHFVLGFFFFVGHLWHAGRARAAAAGFEKGIDRDFEPVLSMTPLN.

The propeptide occupies 1–14; that stretch reads MKTLYSLRRFYPVE. Threonine 15 is modified (N-acetylthreonine). Threonine 15 bears the Phosphothreonine mark. 5 helical membrane-spanning segments follow: residues 69 to 93, 134 to 155, 178 to 200, 255 to 275, and 291 to 312; these read LFEVAHFVPEKPMYEQGLILLPHLA, LIGPETLEESFPFFGYVWKDRN, KALYFGGIYDTWAPGGGDVRKIT, KPFAWARRAFVWSGEAYLSYS, and WFNNTAYPSEFYGPTGPEASQA. Residue glutamate 367 coordinates [CaMn4O5] cluster. Residues 447–471 form a helical membrane-spanning segment; that stretch reads RARAAAAGFEKGIDRDFEPVLSMTP.

It belongs to the PsbB/PsbC family. PsbC subfamily. In terms of assembly, PSII is composed of 1 copy each of membrane proteins PsbA, PsbB, PsbC, PsbD, PsbE, PsbF, PsbH, PsbI, PsbJ, PsbK, PsbL, PsbM, PsbT, PsbX, PsbY, PsbZ, Psb30/Ycf12, at least 3 peripheral proteins of the oxygen-evolving complex and a large number of cofactors. It forms dimeric complexes. Binds multiple chlorophylls and provides some of the ligands for the Ca-4Mn-5O cluster of the oxygen-evolving complex. It may also provide a ligand for a Cl- that is required for oxygen evolution. PSII binds additional chlorophylls, carotenoids and specific lipids. is required as a cofactor.

The protein localises to the plastid. It is found in the chloroplast thylakoid membrane. Its function is as follows. One of the components of the core complex of photosystem II (PSII). It binds chlorophyll and helps catalyze the primary light-induced photochemical processes of PSII. PSII is a light-driven water:plastoquinone oxidoreductase, using light energy to abstract electrons from H(2)O, generating O(2) and a proton gradient subsequently used for ATP formation. This is Photosystem II CP43 reaction center protein from Cryptomeria japonica (Japanese cedar).